The primary structure comprises 487 residues: Aspyridones efflux protein apdF (487 aa).

Residues 1–21 (MSSVRESSKDESIVHPPKAPE) are compositionally biased toward basic and acidic residues. The disordered stretch occupies residues 1–25 (MSSVRESSKDESIVHPPKAPESEPF). The helical transmembrane segment at 35–55 (VALGAGGVLFCTFGYVNAFGV) threads the bilayer. N-linked (GlcNAc...) asparagine glycosylation is present at Asn-67. The next 8 membrane-spanning stretches (helical) occupy residues 75–95 (WIGS…GPLF), 99–119 (GAKV…MTSL), 126–146 (FFLA…APAL), 159–179 (AAMG…PIAL), 191–211 (WAVR…VLGI), 234–254 (VATL…FFYL), 262–282 (GMST…SFFG), and 293–313 (IGPY…TFCW). N-linked (GlcNAc...) asparagine glycosylation is present at Asn-319. The next 3 helical transmembrane spans lie at 322–342 (IIVF…ITPA), 354–374 (IGTY…IGPP), and 385–405 (GFLQ…VLAF).

It belongs to the major facilitator superfamily. Monocarboxylate porter (TC 2.A.1.13) family.

The protein localises to the cell membrane. Efflux pump that may be involved in the secretion of aspyridones. This chain is Aspyridones efflux protein apdF, found in Emericella nidulans (strain FGSC A4 / ATCC 38163 / CBS 112.46 / NRRL 194 / M139) (Aspergillus nidulans).